Here is a 295-residue protein sequence, read N- to C-terminus: Phosphatidylserine decarboxylase proenzyme (295 aa).

Catalysis depends on charge relay system; for autoendoproteolytic cleavage activity residues Asp-113, His-169, and Ser-256. The active-site Schiff-base intermediate with substrate; via pyruvic acid; for decarboxylase activity is Ser-256. Ser-256 bears the Pyruvic acid (Ser); by autocatalysis mark.

Belongs to the phosphatidylserine decarboxylase family. PSD-B subfamily. Prokaryotic type II sub-subfamily. In terms of assembly, heterodimer of a large membrane-associated beta subunit and a small pyruvoyl-containing alpha subunit. It depends on pyruvate as a cofactor. Post-translationally, is synthesized initially as an inactive proenzyme. Formation of the active enzyme involves a self-maturation process in which the active site pyruvoyl group is generated from an internal serine residue via an autocatalytic post-translational modification. Two non-identical subunits are generated from the proenzyme in this reaction, and the pyruvate is formed at the N-terminus of the alpha chain, which is derived from the carboxyl end of the proenzyme. The autoendoproteolytic cleavage occurs by a canonical serine protease mechanism, in which the side chain hydroxyl group of the serine supplies its oxygen atom to form the C-terminus of the beta chain, while the remainder of the serine residue undergoes an oxidative deamination to produce ammonia and the pyruvoyl prosthetic group on the alpha chain. During this reaction, the Ser that is part of the protease active site of the proenzyme becomes the pyruvoyl prosthetic group, which constitutes an essential element of the active site of the mature decarboxylase.

The protein localises to the cell membrane. It carries out the reaction a 1,2-diacyl-sn-glycero-3-phospho-L-serine + H(+) = a 1,2-diacyl-sn-glycero-3-phosphoethanolamine + CO2. The protein operates within phospholipid metabolism; phosphatidylethanolamine biosynthesis; phosphatidylethanolamine from CDP-diacylglycerol: step 2/2. In terms of biological role, catalyzes the formation of phosphatidylethanolamine (PtdEtn) from phosphatidylserine (PtdSer). This chain is Phosphatidylserine decarboxylase proenzyme, found in Clostridium novyi (strain NT).